Here is a 697-residue protein sequence, read N- to C-terminus: MVSESTEAPTPAPGSVREHWNELAEDVRQHQFRYYVRDAPIISDGEFDALLGELNDLENQYPDLRTPDSPTQLVGGGFATDFASADHLERMLSLDNVFATDELRTWISRVEQETGPDLHYLCEVKIDGVALNLVYENGRLVRAATRGDGRTGEEVTLNARTIDDIPEKLTGTDKYPIPALLEVRGEVFFRLEDFAALNAALVEEGKAPFANPRNSAAGSLRQKNPAVTARRRLGMICHGLGRSEGFEPASQYDAYTALAAWGLPVSTHTVRVTGADAVVDRVQYWGEHRHDVEHEIDGLVVKVDETSLQRRLGSTSRAPRWAIAYKYPPEEATTKLLDIRVNVGRTGRVTPFAYMEPVTVAGSTVSLATLHNGSEVKRKGVLIGDTVVLRKAGDVIPEVLGPVVDARTGDEYEFVMPANCPECDTPLAPAKEGDADIRCPNQQYCPAQLRERVFHVAGRGAFDIEVLGYEAATSLLEAKAIGDEGDLFSLTEDDLLKTTLFRTKAGGLSANGRRLLDNLDSAKDKPLWRVLVALSIRHVGPTAARALAGEFGSLDRIRESSVEELAAVDGVGGTIAAAVAEWFGVDWHRQIVDKWSAAGVRMEDERDESIPRNLEGLSIVVTGSLETFSRDQAKEAILVRGGKAAGSVSKKTAFVVAGESPGSKHDKAVELGVPVLDEDGFRRLLEGGPDAVTDSGV.

Residues 44–48, 93–94, and glutamate 123 each bind NAD(+); these read DGEFD and SL. Lysine 125 functions as the N6-AMP-lysine intermediate in the catalytic mechanism. Residues arginine 146, glutamate 186, lysine 302, and lysine 326 each coordinate NAD(+). Residues cysteine 420, cysteine 423, cysteine 439, and cysteine 445 each coordinate Zn(2+). The 89-residue stretch at 609-697 folds into the BRCT domain; sequence SIPRNLEGLS…GPDAVTDSGV (89 aa).

It belongs to the NAD-dependent DNA ligase family. LigA subfamily. Requires Mg(2+) as cofactor. It depends on Mn(2+) as a cofactor.

It catalyses the reaction NAD(+) + (deoxyribonucleotide)n-3'-hydroxyl + 5'-phospho-(deoxyribonucleotide)m = (deoxyribonucleotide)n+m + AMP + beta-nicotinamide D-nucleotide.. DNA ligase that catalyzes the formation of phosphodiester linkages between 5'-phosphoryl and 3'-hydroxyl groups in double-stranded DNA using NAD as a coenzyme and as the energy source for the reaction. It is essential for DNA replication and repair of damaged DNA. The sequence is that of DNA ligase from Rhodococcus opacus (strain B4).